The chain runs to 190 residues: Putative manganese efflux pump MntP (190 aa).

Helical transmembrane passes span 3–23 (PISLLFLALAMSTDAFAAALG), 41–61 (LIFGAIETITPVIGWGIGQVA), 69–89 (DHWIAFTLLLVLGLHMIYNGL), 105–125 (FWILAVTAFATSIDALAVGVG), 133–153 (IMVAALAIGLATTVMVTIGVM), and 168–188 (IVGGIVLIVVGTTILYEHLTA).

This sequence belongs to the MntP (TC 9.B.29) family.

It localises to the cell inner membrane. Probably functions as a manganese efflux pump. This Pseudomonas syringae pv. tomato (strain ATCC BAA-871 / DC3000) protein is Putative manganese efflux pump MntP.